The primary structure comprises 756 residues: U3 small nucleolar RNA-associated protein 25 homolog (756 aa).

The disordered stretch occupies residues 1–159 (MGKRGSRSQS…SQTSPEEFTD (159 aa)). Promotes p53/TP53 degradation regions lie at residues 1–185 (MGKR…SLKA) and 573–635 (VQLP…KKEE). At Ser-10 the chain carries Phosphoserine. Over residues 25–43 (RDFGEEHPFYDRVSRKEAK) the composition is skewed to basic and acidic residues. Phosphoserine occurs at positions 50, 52, 58, 60, 62, and 64. Composition is skewed to acidic residues over residues 54 to 64 (DSSDSESDSES) and 84 to 121 (EEEE…EEMA). The tract at residues 636-697 (LNFTHICEYT…YELPTYPHFY (62 aa)) is represses p53/TP53 degradation.

Belongs to the UTP25 family. As to quaternary structure, interacts with CAPN3; the interaction is required for CAPN3 translocation to the nucleolus. In terms of processing, phosphorylated. Phosphorylation is required to promote p53/TP53 degradation in the nucleolus which promotes cell cycle progression and liver development. Expressed in colon.

The protein resides in the nucleus. Its subcellular location is the nucleolus. Its function is as follows. Component of the ribosomal small subunit processome for the biogenesis of ribosomes, functions in pre-ribosomal RNA (pre-rRNA) processing. Essential for embryonic development in part through the regulation of p53 pathway. Controls the expansion growth of digestive organs and liver. Also involved in the sympathetic neuronal development. Mediates, with CAPN3, the proteasome-independent degradation of p53/TP53. The chain is U3 small nucleolar RNA-associated protein 25 homolog from Homo sapiens (Human).